We begin with the raw amino-acid sequence, 264 residues long: MAATGDALTPQGYIQHHLTNLSVGEGFWTWHIDSLLFSVGLGVLFLWIFRSVGKKATTGVPGKLQCLIEMIVEFVDASVKETFHGRNPVIAPLALTIFVWVFMMNFMDMIPVDWLPSLALLAGVEYLKVVPTTDVNITFSLAIGVFVLIIYYSIKVKGVSGFVKELTLQPFNHWAMIPVNLLLESVTLIAKPISLALRLFGNLYAGELIFILIALMYSANWAMATLGVGLQLGWLIFHILVITLQAFIFMMLTIVYLSMAHEDH.

7 helical membrane-spanning segments follow: residues 29–49 (TWHI…LWIF), 90–110 (IAPL…MDMI), 111–131 (PVDW…KVVP), 134–154 (DVNI…YYSI), 177–197 (IPVN…SLAL), 208–228 (LIFI…TLGV), and 235–255 (LIFH…LTIV).

Belongs to the ATPase A chain family. As to quaternary structure, F-type ATPases have 2 components, CF(1) - the catalytic core - and CF(0) - the membrane proton channel. CF(1) has five subunits: alpha(3), beta(3), gamma(1), delta(1), epsilon(1). CF(0) has three main subunits: a(1), b(2) and c(9-12). The alpha and beta chains form an alternating ring which encloses part of the gamma chain. CF(1) is attached to CF(0) by a central stalk formed by the gamma and epsilon chains, while a peripheral stalk is formed by the delta and b chains.

It localises to the cell inner membrane. In terms of biological role, key component of the proton channel; it plays a direct role in the translocation of protons across the membrane. The protein is ATP synthase subunit a of Shewanella denitrificans (strain OS217 / ATCC BAA-1090 / DSM 15013).